The following is a 289-amino-acid chain: Metal-staphylopine import system permease protein CntC (289 aa).

The next 5 helical transmembrane spans lie at 13 to 33 (AVIA…APLV), 77 to 97 (LLYV…LGFL), 115 to 135 (VMLA…FGMG), 194 to 214 (IAII…GFSF), and 249 to 269 (IAIV…QIAI). An ABC transmembrane type-1 domain is found at 73–262 (IRPSLLYVFV…IIVMAFNFLS (190 aa)).

It belongs to the binding-protein-dependent transport system permease family. As to quaternary structure, the complex is composed of two ATP-binding proteins (CntD and CntF), two transmembrane proteins (CntB and CntC) and a solute-binding protein (CntA).

It is found in the cell membrane. Its function is as follows. Part of the ABC transporter complex CntABCDF (Opp1) involved in the uptake of metal in complex with the metallophore staphylopine (StP). May be involved in the import of a large array of divalent metals ions such as nickel, cobalt, zinc, copper and iron. Probably responsible for the translocation of the substrate across the membrane. The polypeptide is Metal-staphylopine import system permease protein CntC (Staphylococcus aureus (strain Mu50 / ATCC 700699)).